The chain runs to 85 residues: VGIVGKYGTRYGASLRKMVKKIEITQHSKYTCTFCGKTKMKRRAVGIWHCGSCMKTVAGGAWTYNTSSAVTVKSAIRRLREMKDQ.

Residues Cys-32, Cys-35, Cys-50, and Cys-53 each contribute to the Zn(2+) site. The C4-type zinc-finger motif lies at 32-53; it reads CTFCGKTKMKRRAVGIWHCGSC.

It belongs to the eukaryotic ribosomal protein eL43 family. As to quaternary structure, component of the large ribosomal subunit.

It localises to the cytoplasm. Its function is as follows. Component of the large ribosomal subunit. The ribosome is a large ribonucleoprotein complex responsible for the synthesis of proteins in the cell. This is Large ribosomal subunit protein eL43 (rpl37a) from Myxine glutinosa (Atlantic hagfish).